A 328-amino-acid chain; its full sequence is tRNA uridine(34) hydroxylase (328 aa).

The 95-residue stretch at 130-224 (LDEDTVVLDT…YGKDPEVQGE (95 aa)) folds into the Rhodanese domain. Cys-184 serves as the catalytic Cysteine persulfide intermediate.

Belongs to the TrhO family.

It catalyses the reaction uridine(34) in tRNA + AH2 + O2 = 5-hydroxyuridine(34) in tRNA + A + H2O. In terms of biological role, catalyzes oxygen-dependent 5-hydroxyuridine (ho5U) modification at position 34 in tRNAs. This is tRNA uridine(34) hydroxylase from Streptococcus sanguinis (strain SK36).